A 280-amino-acid polypeptide reads, in one-letter code: MAIRKYKPTTPGRRGASVSDFAEITRSTPEKSLVRPLHGHGGRNAHGRITTRHKGGGHKRAYRVIDFGRNDKDGVNAKVAHIEYDPNRTARIALLHYLDGEKRYIIAPNGLSQGDVVESGANADIKPGNNLPLRNIPAGTLVHAVELRPGGGAKLARSAGSSIQLLGKEASYASLRMPSGEIRRVDVRCRATVGEVGNAEQANINWGKAGRMRWKGKRPSVRGVVMNPVDHPHGGGEGKTSGGRHPVSPWGKPEGRTRNPNKASNKLIVRRRRTGKKHGR.

Disordered regions lie at residues 27-58 (STPEKSLVRPLHGHGGRNAHGRITTRHKGGGH) and 226-280 (MNPV…KHGR). 2 stretches are compositionally biased toward basic residues: residues 37-58 (LHGHGGRNAHGRITTRHKGGGH) and 268-280 (IVRRRRTGKKHGR).

It belongs to the universal ribosomal protein uL2 family. Part of the 50S ribosomal subunit. Forms a bridge to the 30S subunit in the 70S ribosome.

One of the primary rRNA binding proteins. Required for association of the 30S and 50S subunits to form the 70S ribosome, for tRNA binding and peptide bond formation. It has been suggested to have peptidyltransferase activity; this is somewhat controversial. Makes several contacts with the 16S rRNA in the 70S ribosome. This chain is Large ribosomal subunit protein uL2, found in Mycobacterium ulcerans (strain Agy99).